We begin with the raw amino-acid sequence, 346 residues long: 3-dehydroquinate synthase (346 aa).

NAD(+) contacts are provided by residues aspartate 62–lysine 67, glycine 96–aspartate 100, threonine 120–threonine 121, lysine 133, lysine 142, and phenylalanine 160–threonine 163. Zn(2+) is bound by residues glutamate 175, histidine 234, and histidine 251.

It belongs to the sugar phosphate cyclases superfamily. Dehydroquinate synthase family. It depends on Co(2+) as a cofactor. Requires Zn(2+) as cofactor. NAD(+) serves as cofactor.

It localises to the cytoplasm. It carries out the reaction 7-phospho-2-dehydro-3-deoxy-D-arabino-heptonate = 3-dehydroquinate + phosphate. The protein operates within metabolic intermediate biosynthesis; chorismate biosynthesis; chorismate from D-erythrose 4-phosphate and phosphoenolpyruvate: step 2/7. Functionally, catalyzes the conversion of 3-deoxy-D-arabino-heptulosonate 7-phosphate (DAHP) to dehydroquinate (DHQ). The polypeptide is 3-dehydroquinate synthase (Campylobacter curvus (strain 525.92)).